We begin with the raw amino-acid sequence, 227 residues long: AN1-type zinc finger protein 3 (227 aa).

The segment at 12 to 44 (PSLPPRCPCGFWGSSKTMNLCSKCFADFQKKQP) adopts an A20-type zinc-finger fold. Residues Cys18, Cys20, Cys32, and Cys35 each coordinate Zn(2+). Disordered stretches follow at residues 41-99 (KKQP…TEEC) and 113-151 (PTKR…RSKQ). Low complexity-rich tracts occupy residues 49-59 (TPSTSNSQSDL) and 66-77 (SDNNNTSVTTPT). Polar residues-rich tracts occupy residues 78–96 (LSPS…SPST) and 113–127 (PTKR…SENE). Residues 135–148 (RLVENPERPEESGR) show a composition bias toward basic and acidic residues. An AN1-type zinc finger spans residues 151–200 (QKSRRRCFQCQTKLELVQQELGSCRCGYVFCMLHRLPEQHDCTFDHMGRG). Residues Cys157, Cys160, Cys174, Cys176, Cys181, His184, His190, and Cys192 each coordinate Zn(2+).

Expressed in testis.

The sequence is that of AN1-type zinc finger protein 3 (Zfand3) from Mus musculus (Mouse).